Here is an 80-residue protein sequence, read N- to C-terminus: Small ribosomal subunit protein bS18 (80 aa).

It belongs to the bacterial ribosomal protein bS18 family. As to quaternary structure, part of the 30S ribosomal subunit. Forms a tight heterodimer with protein bS6.

Its function is as follows. Binds as a heterodimer with protein bS6 to the central domain of the 16S rRNA, where it helps stabilize the platform of the 30S subunit. This Acholeplasma laidlawii (strain PG-8A) protein is Small ribosomal subunit protein bS18.